The primary structure comprises 141 residues: Early nodulin-like protein 19 (141 aa).

The signal sequence occupies residues 1–26; it reads MGRSMVLISAVVLAFLVAAPIPEVTA. A Phytocyanin domain is found at 27-127; the sequence is KKYLVGDKKF…GMKLDVLVET (101 aa). Residues N42 and N88 are each glycosylated (N-linked (GlcNAc...) asparagine). C80 and C115 are oxidised to a cystine.

This sequence belongs to the early nodulin-like (ENODL) family.

Its function is as follows. May act as a carbohydrate transporter. The sequence is that of Early nodulin-like protein 19 from Arabidopsis thaliana (Mouse-ear cress).